The following is an 880-amino-acid chain: Potassium transport protein 2 (880 aa).

N9 is a glycosylation site (N-linked (GlcNAc...) asparagine). The next 2 helical transmembrane spans lie at 28 to 48 (FVQD…LYGS) and 84 to 104 (TILL…LTLF). The interval 157–182 (MHRPVAPETKAEEAEHQENEKHHRHH) is disordered. The span at 165–177 (TKAEEAEHQENEK) shows a compositional bias: basic and acidic residues. N-linked (GlcNAc...) asparagine glycans are attached at residues N239, N283, N293, N294, N321, N443, and N460. The span at 289–315 (HHLDNNSSISSHNPSLETANDGNQETV) shows a compositional bias: polar residues. Residues 289-344 (HHLDNNSSISSHNPSLETANDGNQETVSSSNSNYSTTRVDNDPHVASYSPQNSNFD) form a disordered region. A compositionally biased stretch (low complexity) spans 316–325 (SSSNSNYSTT). 6 consecutive transmembrane segments (helical) span residues 494 to 514 (ILVV…LIFI), 571 to 591 (LIFL…WIMI), 625 to 645 (WVLF…FMVL), 684 to 704 (IAPA…YPIA), 756 to 776 (QLSH…IVEG), and 787 to 807 (FTLF…GLSL). Residues 857 to 880 (REEEDYMRRHGKKNTNRADPVPSS) form a disordered region.

This sequence belongs to the TrkH potassium transport family.

The protein resides in the cell membrane. Together with TRK1, defines the major, high-affinity potassium influx transport system. Involved in maintenance of the proper sodium/potassium ratio in the cell and in regulating the plasma membrane potential. The sequence is that of Potassium transport protein 2 (trk2) from Schizosaccharomyces pombe (strain 972 / ATCC 24843) (Fission yeast).